A 641-amino-acid polypeptide reads, in one-letter code: Transcription termination factor MTERF2, chloroplastic (641 aa).

2 disordered regions span residues 54–80 (LKLNKNPNESQETFVPPPPPPRRDLDG) and 606–641 (FEAGLDSEDSQPSDENISDQEIAFSDEAEEEEDLTE). Positions 610 to 641 (LDSEDSQPSDENISDQEIAFSDEAEEEEDLTE) are enriched in acidic residues.

The protein belongs to the mTERF family.

Its subcellular location is the plastid. The protein resides in the chloroplast. In terms of biological role, transcription termination factor involved in processing of plastid transcripts. Essential for embryogenesis. The protein is Transcription termination factor MTERF2, chloroplastic of Arabidopsis thaliana (Mouse-ear cress).